The chain runs to 430 residues: MTRSEALFEQAKKTIPGGVNSPVRAFNGVGGSPLFIEKADGAYIYDADGKAYIDYVGSWGPMILGHNHPKIREAVLAAVHNGLSFGAPTELEVQMAEKVIAMVPSIEQVRMVSSGTEATMSAIRLARGFTNRDKILKFEGCYHGHADCLLVKAGSGALTLGQPSSPGIPEDFAKHTLTAVYNDLDSVRSLFEQYPTEISCIIIEPVAGNMNCIPPIPGFLEGLRSLCDEFGALLIIDEVMTGFRVSKSGAQGHYGVTPDLTTLGKVIGGGMPVGAFGGRKDVMQFIAPTGPVYQAGTLSGNPIAMSAGLAQMEALCEEGLYEALSAKTKRIAEGFKAAADKHGIPMAINYVGGMFGFFFTEQEHITRFDQVTKCNIEHFRTFYHGMLDEGVYLAPSAYEAGFLSMAHGEEELRLTLEAADRVLARMKAAN.

At lysine 265 the chain carries N6-(pyridoxal phosphate)lysine.

It belongs to the class-III pyridoxal-phosphate-dependent aminotransferase family. HemL subfamily. As to quaternary structure, homodimer. Requires pyridoxal 5'-phosphate as cofactor.

Its subcellular location is the cytoplasm. The enzyme catalyses (S)-4-amino-5-oxopentanoate = 5-aminolevulinate. It participates in porphyrin-containing compound metabolism; protoporphyrin-IX biosynthesis; 5-aminolevulinate from L-glutamyl-tRNA(Glu): step 2/2. In Shewanella oneidensis (strain ATCC 700550 / JCM 31522 / CIP 106686 / LMG 19005 / NCIMB 14063 / MR-1), this protein is Glutamate-1-semialdehyde 2,1-aminomutase.